The chain runs to 100 residues: UPF0213 protein YhbQ (100 aa).

Residues 2–77 (TPWFLYLIRT…KQLTKRQKER (76 aa)) enclose the GIY-YIG domain.

Belongs to the UPF0213 family.

The polypeptide is UPF0213 protein YhbQ (Escherichia coli O81 (strain ED1a)).